Reading from the N-terminus, the 377-residue chain is Glutamate 5-kinase (377 aa).

Position 21 (Lys21) interacts with ATP. Substrate contacts are provided by Ser61, Asp149, and Asn161. Residues 181–182 (SD) and 223–229 (SGGMTSK) contribute to the ATP site. The 78-residue stretch at 286-363 (RGSVQVDAGA…REHEELLGYA (78 aa)) folds into the PUA domain.

The protein belongs to the glutamate 5-kinase family.

The protein localises to the cytoplasm. It catalyses the reaction L-glutamate + ATP = L-glutamyl 5-phosphate + ADP. It functions in the pathway amino-acid biosynthesis; L-proline biosynthesis; L-glutamate 5-semialdehyde from L-glutamate: step 1/2. Its function is as follows. Catalyzes the transfer of a phosphate group to glutamate to form L-glutamate 5-phosphate. The protein is Glutamate 5-kinase of Novosphingobium aromaticivorans (strain ATCC 700278 / DSM 12444 / CCUG 56034 / CIP 105152 / NBRC 16084 / F199).